We begin with the raw amino-acid sequence, 883 residues long: Phosphoenolpyruvate carboxylase (883 aa).

Catalysis depends on residues histidine 138 and lysine 546.

Belongs to the PEPCase type 1 family. Requires Mg(2+) as cofactor.

The catalysed reaction is oxaloacetate + phosphate = phosphoenolpyruvate + hydrogencarbonate. Its function is as follows. Forms oxaloacetate, a four-carbon dicarboxylic acid source for the tricarboxylic acid cycle. In Escherichia coli (strain 55989 / EAEC), this protein is Phosphoenolpyruvate carboxylase.